Reading from the N-terminus, the 315-residue chain is GTP cyclohydrolase MptA (315 aa).

Belongs to the GTP cyclohydrolase IV family. In terms of assembly, homodimer. Fe(2+) is required as a cofactor.

The catalysed reaction is GTP + H2O = 7,8-dihydroneopterin 2',3'-cyclic phosphate + formate + diphosphate + H(+). The protein operates within cofactor biosynthesis; 5,6,7,8-tetrahydromethanopterin biosynthesis. Converts GTP to 7,8-dihydro-D-neopterin 2',3'-cyclic phosphate, the first intermediate in the biosynthesis of coenzyme methanopterin. The chain is GTP cyclohydrolase MptA from Methanococcus maripaludis (strain C5 / ATCC BAA-1333).